Here is a 119-residue protein sequence, read N- to C-terminus: MSDVIMVNTEYIPGKRIVKVFGTIWGITVRSRGLGGNLVAGLRSLAGGEIKEYTKMLSDARNTAMERLQSAAEQIGANAVINVRFDSSDIGQVMTEIVAYGTAVLVEDVTDNIQRVGLS.

It belongs to the UPF0145 family.

This is UPF0145 protein Ta0182 from Thermoplasma acidophilum (strain ATCC 25905 / DSM 1728 / JCM 9062 / NBRC 15155 / AMRC-C165).